The primary structure comprises 20 residues: Putative phosphoglycerate kinase (20 aa).

Belongs to the phosphoglycerate kinase family. Monomer.

Its subcellular location is the cytoplasm. It catalyses the reaction (2R)-3-phosphoglycerate + ATP = (2R)-3-phospho-glyceroyl phosphate + ADP. Its pathway is carbohydrate degradation; glycolysis; pyruvate from D-glyceraldehyde 3-phosphate: step 2/5. The chain is Putative phosphoglycerate kinase (pgk) from Clostridium pasteurianum.